We begin with the raw amino-acid sequence, 1500 residues long: ABC transporter G family member 42 (1500 aa).

The tract at residues Val-26 to Asp-56 is disordered. One can recognise an ABC transporter 1 domain in the interval Leu-182–Glu-455. Residue Gly-215 to Thr-222 participates in ATP binding. The ABC transmembrane type-2 1 domain maps to Glu-533–Phe-746. The next 7 helical transmembrane spans lie at Phe-551 to Phe-571, Gly-584 to Ala-604, Ile-639 to Phe-659, Leu-670 to Leu-690, Ile-695 to Leu-715, Trp-724 to Asn-744, and Phe-783 to Leu-803. Basic and acidic residues predominate over residues Thr-822–His-834. A disordered region spans residues Thr-822–Glu-850. Polar residues predominate over residues Arg-837 to Gly-846. Residues Met-894–Pro-1151 form the ABC transporter 2 domain. Gly-939–Thr-946 provides a ligand contact to ATP. The ABC transmembrane type-2 2 domain maps to Gly-1224–Tyr-1438. 7 helical membrane passes run Leu-1245–Ile-1265, Met-1277–Val-1297, Ile-1331–Phe-1351, Phe-1358–Met-1378, Val-1388–Ile-1408, Trp-1416–Thr-1436, and Val-1472–Ile-1492.

Belongs to the ABC transporter superfamily. ABCG family. PDR (TC 3.A.1.205) subfamily.

It is found in the membrane. May be a general defense protein. The chain is ABC transporter G family member 42 from Oryza sativa subsp. japonica (Rice).